A 275-amino-acid chain; its full sequence is Glutamate 5-kinase (275 aa).

K17 contributes to the ATP binding site. 3 residues coordinate substrate: S57, D144, and N160. ATP is bound by residues 180–181 (SD) and 222–228 (TGGMLSK).

This sequence belongs to the glutamate 5-kinase family.

The protein resides in the cytoplasm. The catalysed reaction is L-glutamate + ATP = L-glutamyl 5-phosphate + ADP. It participates in amino-acid biosynthesis; L-proline biosynthesis; L-glutamate 5-semialdehyde from L-glutamate: step 1/2. Its function is as follows. Catalyzes the transfer of a phosphate group to glutamate to form L-glutamate 5-phosphate. This is Glutamate 5-kinase from Streptococcus pyogenes serotype M12 (strain MGAS2096).